The following is a 941-amino-acid chain: 26S proteasome regulatory subunit RPN2 (941 aa).

PC repeat units follow at residues 363 to 396, 400 to 437, 442 to 476, 477 to 511, 513 to 546, 547 to 582, 583 to 615, 617 to 651, 652 to 689, and 695 to 731; these read SATA…SSRF, GSLY…EDVD, GASL…TSGE, AAAF…GNIT, GLSM…LIRY, GGAF…DVRR, AAVT…AHDR, GAAF…FVRQ, AAMI…KHQE, and GACV…VGLA. Positions 808–854 are disordered; the sequence is KARAKKTKKEKDTNEDDKKKKEKDLKKEETKKDDAKKESEAEEDFNK. Positions 816–854 are enriched in basic and acidic residues; it reads KEKDTNEDDKKKKEKDLKKEETKKDDAKKESEAEEDFNK.

The protein belongs to the proteasome subunit S1 family.

Its function is as follows. Acts as a regulatory subunit of the 26S proteasome which is involved in the ATP-dependent degradation of ubiquitinated proteins. In Candida glabrata (strain ATCC 2001 / BCRC 20586 / JCM 3761 / NBRC 0622 / NRRL Y-65 / CBS 138) (Yeast), this protein is 26S proteasome regulatory subunit RPN2 (RPN2).